The following is a 364-amino-acid chain: Popeye domain-containing protein 2 (364 aa).

Residue Asn-4 is glycosylated (N-linked (GlcNAc...) asparagine). The next 2 helical transmembrane spans lie at Leu-37–Leu-57 and Ile-77–Tyr-97. Residues Ala-276–Ser-333 form a disordered region. The span at Thr-300–Pro-309 shows a compositional bias: polar residues. Thr-361 carries the post-translational modification Phosphothreonine.

Belongs to the popeye family. In terms of tissue distribution, expressed predominantly in the heart and in the skeletal muscle.

It is found in the membrane. The protein resides in the cell membrane. The protein localises to the sarcolemma. Its function is as follows. Important for the maintenance of cardiac function. Plays a regulatory function in heart rate dynamics mediated, at least in part, through cAMP-binding and, probably, by increasing cell surface expression of the potassium channel KCNK2 and enhancing current density. The chain is Popeye domain-containing protein 2 (POPDC2) from Homo sapiens (Human).